We begin with the raw amino-acid sequence, 757 residues long: Two pore calcium channel protein 1 (757 aa).

The Cytoplasmic portion of the chain corresponds to 1-94 (MRERGEMREA…NDTRFERAMR (94 aa)). Residues 24–48 (HSHGSGSSGTGSHTSGGGGGWRGSR) form a disordered region. The span at 29–45 (GSSGTGSHTSGGGGGWR) shows a compositional bias: gly residues. Residues 95 to 115 (FYFVYLRLDWLWSLNLFALIL) form a helical membrane-spanning segment. The Extracellular segment spans residues 116–152 (LNFLEKPLWCRGYSQHACDQRDLYFLGQLPYLSKTES). A helical membrane pass occupies residues 153–173 (LIYEGLTLVILVMDIFYPLSY). Over 174–188 (EGLNLFWKNTINKLK) the chain is Cytoplasmic. Residues 189 to 209 (VLLLFILACDILVFAFSPQPF) form a helical membrane-spanning segment. Arginine 210 is a topological domain (extracellular). A helical; Voltage-sensor transmembrane segment spans residues 211–228 (VAPYIRVAFLIMNIRELR). Residues 229-233 (MCAVT) are Cytoplasmic-facing. The chain crosses the membrane as a helical span at residues 234–254 (LVGMVGTYLNVLALSLLFLLF). Over 255–270 (ASWLAYVTFEDTPQGK) the chain is Extracellular. The pore-forming intramembrane region spans 271–285 (TVFSSYGTTLYQMFI). Topologically, residues 286–308 (LFTTSNNPDVWVPAYKSSRWSSL) are extracellular. The helical transmembrane segment at 309 to 329 (FFIVYVLLGVYFLTNLILAVI) threads the bilayer. Over 330-453 (YDSFKEQLAK…LCEWLKSFVR (124 aa)) the chain is Cytoplasmic. 2 EF-hand domains span residues 347-382 (TRKS…LNKY) and 388-423 (TSRE…IAIK). Residues 454 to 474 (SPLFEYIVIFVLLMNLVAVII) form a helical membrane-spanning segment. The Extracellular portion of the chain corresponds to 475–493 (ETTLDIENSSSQKVWQEVE). N-linked (GlcNAc...) asparagine glycosylation occurs at asparagine 482. The helical transmembrane segment at 494–514 (FVFGWIYVIEMALKIFSLGFG) threads the bilayer. Residues 515-523 (AYWMEGQNK) lie on the Cytoplasmic side of the membrane. Residues 524–544 (FDFVLTWTIFIGETLTFAFPS) traverse the membrane as a helical segment. The Extracellular portion of the chain corresponds to 545–553 (KLSFLSNGE). Residues 554–571 (WIRYLLLGRMLRLTRILL) traverse the membrane as a helical; Voltage-sensor segment. Over 572 to 595 (QVRRFRAFVATFFTLMSSLMPYLG) the chain is Cytoplasmic. Residues 596–616 (IVFCTLCIYCSLGLQIFGGIV) form a helical membrane-spanning segment. At 617–640 (YAGNPTLEETDLFSNDYLLFNFND) the chain is on the extracellular side. An intramembrane region (pore-forming) is located at residues 641–655 (YPSGMVTLFNLLVMG). Topologically, residues 656-676 (NWQAWMESYRQLTGSYWSLIY) are extracellular. The helical transmembrane segment at 677 to 697 (FVSFYLISVLLLLNLIVAFVL) threads the bilayer. Over 698 to 757 (EAFFAEMELEKDGEADIQDPTLEGRNRRRSVRVRTKGTMVDILLHHMLSNELDGSQNRDQ) the chain is Cytoplasmic.

It belongs to the calcium channel alpha-1 subunit (TC 1.A.1.11) family. Two pore calcium channel subfamily. Homodimer. In terms of tissue distribution, expressed in shoot, mature leaf, cultured cells, and at lower level in roots.

Its subcellular location is the membrane. With respect to regulation, inhibited by the VDCC blocker verapamil in yeast cells. Channel activity may be down-regulated by cytosolic Ca(2+) in rice cells. Inhibited by Al(3+). Functionally, may function as one of the major voltage-gated Ca(2+) channel (VDCC) across the plasma membrane. May be involved in the regulation of cytosolic Ca(2+) and in growth and development. Acts as the major ROS-responsive Ca(2+) channel and is the possible target of Al-dependent inhibition. Determines sensitivity to T.viride xylanase elicitor. Plays a regulatory role in elicitor-induced defense responses and hypersensitive cell death. This chain is Two pore calcium channel protein 1 (TPC1), found in Oryza sativa subsp. japonica (Rice).